A 464-amino-acid polypeptide reads, in one-letter code: Peptidase inhibitor 16 (464 aa).

An N-terminal signal peptide occupies residues 1-27 (MHGSGSLLACLLPPLLLLGAAPGPAGA). One can recognise an SCP domain in the interval 37 to 165 (VELHNLYRTQ…TNIHLLVCNY (129 aa)). A glycan (N-linked (GlcNAc...) asparagine) is linked at N114. Disordered regions lie at residues 208–241 (DLSS…TEPP), 260–281 (VETK…TKTP), 304–347 (PATL…LMGT), and 386–412 (TTLK…ANAV). The segment covering 311 to 325 (STHDPIPKSADKEAS) has biased composition (basic and acidic residues). Over residues 395-411 (SSKSLSNSPSASATANA) the composition is skewed to low complexity.

It belongs to the CRISP family. As to quaternary structure, interacts with PSP94/MSMB. In terms of processing, N-glycosylated.

The protein resides in the secreted. Functionally, may inhibit cardiomyocyte growth. This is Peptidase inhibitor 16 (PI16) from Bos taurus (Bovine).